The sequence spans 203 residues: Urease accessory protein UreE (203 aa).

Positions 170–203 are disordered; the sequence is EHHGHSHSHSHSHSHDHDHQHGPSCSHGHHHGHR.

It belongs to the UreE family.

The protein localises to the cytoplasm. Functionally, involved in urease metallocenter assembly. Binds nickel. Probably functions as a nickel donor during metallocenter assembly. The sequence is that of Urease accessory protein UreE from Burkholderia mallei (strain SAVP1).